The sequence spans 384 residues: Histidinol-phosphate aminotransferase (384 aa).

An N6-(pyridoxal phosphate)lysine modification is found at lysine 223.

The protein belongs to the class-II pyridoxal-phosphate-dependent aminotransferase family. Requires pyridoxal 5'-phosphate as cofactor.

The enzyme catalyses L-histidinol phosphate + 2-oxoglutarate = 3-(imidazol-4-yl)-2-oxopropyl phosphate + L-glutamate. Its pathway is amino-acid biosynthesis; L-histidine biosynthesis; L-histidine from 5-phospho-alpha-D-ribose 1-diphosphate: step 7/9. The protein is Histidinol-phosphate aminotransferase (his3) of Schizosaccharomyces pombe (strain 972 / ATCC 24843) (Fission yeast).